We begin with the raw amino-acid sequence, 241 residues long: Tubulin-like protein alpha-4B (241 aa).

A compositionally biased stretch (basic and acidic residues) spans 1-10; the sequence is MRHQQTERQD. Positions 1-20 are disordered; it reads MRHQQTERQDPSQPLSRQHG. D10 contacts GTP. Mg(2+) is bound at residue D10. A compositionally biased stretch (polar residues) spans 11–20; it reads PSQPLSRQHG. GTP is bound by residues S79, G83, T84, T118, N145, and N167. E193 is an active-site residue.

The protein belongs to the tubulin family. Mg(2+) serves as cofactor. In terms of processing, some glutamate residues at the C-terminus are polyglutamylated, resulting in polyglutamate chains on the gamma-carboxyl group. Polyglutamylation plays a key role in microtubule severing by spastin (SPAST). SPAST preferentially recognizes and acts on microtubules decorated with short polyglutamate tails: severing activity by SPAST increases as the number of glutamates per tubulin rises from one to eight, but decreases beyond this glutamylation threshold. Glutamylation is also involved in cilia motility. Some glutamate residues at the C-terminus are monoglycylated but not polyglycylated due to the absence of functional TTLL10 in human. Monoglycylation is mainly limited to tubulin incorporated into cilia and flagella axonemes, which is required for their stability and maintenance. Flagella glycylation controls sperm motility. Both polyglutamylation and monoglycylation can coexist on the same protein on adjacent residues, and lowering glycylation levels increases polyglutamylation, and reciprocally.

The protein localises to the cytoplasm. Its subcellular location is the cytoskeleton. It carries out the reaction GTP + H2O = GDP + phosphate + H(+). Tubulin is the major constituent of microtubules, a cylinder consisting of laterally associated linear protofilaments composed ofalpha- and beta-tubulin heterodimers. The chain is Tubulin-like protein alpha-4B (TUBA4B) from Homo sapiens (Human).